We begin with the raw amino-acid sequence, 282 residues long: PAK4-inhibitor INKA1 (282 aa).

2 disordered regions span residues 21–50 and 92–127; these read RDTG…QFRA and GFSE…FSVS. Inka box regions lie at residues 163-200 and 256-282; these read EAED…ELPE and PADI…VSYL.

It belongs to the INKA family. Interacts with PAK4. As to expression, expressed in tissues of the developing head during neurulation.

It is found in the nucleus. The protein localises to the cytoplasm. Its function is as follows. Inhibitor of the serine/threonine-protein kinase PAK4. Acts by binding PAK4 in a substrate-like manner, inhibiting the protein kinase activity. The sequence is that of PAK4-inhibitor INKA1 from Mus musculus (Mouse).